A 182-amino-acid polypeptide reads, in one-letter code: NADH-quinone oxidoreductase subunit I (182 aa).

2 consecutive 4Fe-4S ferredoxin-type domains span residues 52-82 and 92-121; these read LTRD…LQKA and DFFR…LTPD. Residues C62, C65, C68, C72, C101, C104, C107, and C111 each coordinate [4Fe-4S] cluster.

Belongs to the complex I 23 kDa subunit family. In terms of assembly, NDH-1 is composed of 13 different subunits. Subunits NuoA, H, J, K, L, M, N constitute the membrane sector of the complex. [4Fe-4S] cluster serves as cofactor.

It localises to the cell inner membrane. The enzyme catalyses a quinone + NADH + 5 H(+)(in) = a quinol + NAD(+) + 4 H(+)(out). NDH-1 shuttles electrons from NADH, via FMN and iron-sulfur (Fe-S) centers, to quinones in the respiratory chain. The immediate electron acceptor for the enzyme in this species is believed to be ubiquinone. Couples the redox reaction to proton translocation (for every two electrons transferred, four hydrogen ions are translocated across the cytoplasmic membrane), and thus conserves the redox energy in a proton gradient. The chain is NADH-quinone oxidoreductase subunit I from Pseudomonas syringae pv. syringae (strain B728a).